The sequence spans 690 residues: MLACKFSQYQAFIMDGVKLLGTCALIILLSTTSTVVGRDRITFTPIEDSAGLMFERMYGLRHHTDDRFVFVKKFNFVSVLQELNNIKSKIELYEAQVSTCTNVRQIKQNRSSIIKARIENQLQFLTQLNKNLITYSVESSILSNDVLDNIDLEYDDSGEFDVYDEYEQPSHWSNMTVSDAQALLRNPPKDRVMFLDTVTTSDVSSKYEEYINCIVSNRTVENECMFLANMMNVLNDKLDDAAALAKMLERIVKQTRKNKLNISNTVIDDDTLLTEMKKLTQTLYNQNRVWVVDFNKDMNSYFDLSQAYKLHLYVDLNTVIMFITMPLLKSTAVSFNLYRVMTVPFCRGKMCLLIISGNEYFGITDSKNYYVPVSDNFRQDCQEFTGYNEFLCPETEPIATMNSKVCEIEMFMGRYSDDVDNMCDIRVANYNPKKAYVNTLIDYRKWLYIFPNTTVSVHYYCHDALVEVDTKVSPGVGVMFSTMAQTCSIRITYDVTITVDSRFYVSHSTTYWPKKKFNFNNYIDQMLLEKATTSFIPTVDNFTRPVLLQLPHKFHIKDYTSTPHHFFHQSKIYTNSAAPDEDSQDDSNTTVVIIAIVAAMILFCGLLLFLFCCIKKRCHQSNNVVVQYKNNNEFVTICNNLEDNRAYINLPNEYDSDDMPKPLYPLLGFNDDLLKDDKPVLYPMIIERIK.

An N-terminal signal peptide occupies residues 1 to 37; that stretch reads MLACKFSQYQAFIMDGVKLLGTCALIILLSTTSTVVG.

The protein resides in the virion. In terms of biological role, pathogenicity factor that accelerates mortality in the host insect. The polypeptide is Protein AC23 (Autographa californica nuclear polyhedrosis virus (AcMNPV)).